We begin with the raw amino-acid sequence, 143 residues long: MAPKKKVTGLIKLQINAGAANPAPPIGPALGQHGVNIMEFCKAYNAATESQRGNVIPVEITVYEDRSFTFVLKTPPAAELIKKAAGVAKGSGVPHTTKVGKLTQEQVRAIAEQKMVDLNANDIDAASKIIAGTARSMGITVEA.

This sequence belongs to the universal ribosomal protein uL11 family. Part of the ribosomal stalk of the 50S ribosomal subunit. Interacts with L10 and the large rRNA to form the base of the stalk. L10 forms an elongated spine to which L12 dimers bind in a sequential fashion forming a multimeric L10(L12)X complex. One or more lysine residues are methylated.

Functionally, forms part of the ribosomal stalk which helps the ribosome interact with GTP-bound translation factors. This chain is Large ribosomal subunit protein uL11, found in Leifsonia xyli subsp. xyli (strain CTCB07).